A 386-amino-acid polypeptide reads, in one-letter code: Agamous-like MADS-box protein AGL30 (386 aa).

The MADS-box domain maps to 1 to 53; it reads MGRVKLKIKKLENTNGRQSTFAKRKNGILKKANELSILCDIDIVLLMFSPTGK. The disordered stretch occupies residues 341-360; that stretch reads PDSSAYNDNTNQTRFGSSSS. Polar residues predominate over residues 344-356; sequence SAYNDNTNQTRFG.

Forms heterodimers with AGL66 and AGL104. Expressed in pollen.

Its subcellular location is the nucleus. Its function is as follows. Probable transcription factor that forms heterodimers with the MADS-box proteins AGL66 and AGL104 and is involved in the regulation of pollen maturation at the late stages of pollen development and pollen tube growth. The chain is Agamous-like MADS-box protein AGL30 from Arabidopsis thaliana (Mouse-ear cress).